Reading from the N-terminus, the 81-residue chain is ATP synthase subunit C, plastid (81 aa).

Helical transmembrane passes span 3–23 (PLIP…ASIG) and 61–81 (EALT…NPFI).

It belongs to the ATPase C chain family. As to quaternary structure, F-type ATPases have 2 components, F(1) - the catalytic core - and F(0) - the membrane proton channel. F(1) has five subunits: alpha(3), beta(3), gamma(1), delta(1), epsilon(1). F(0) has four main subunits: a(1), b(1), b'(1) and c(10-14). The alpha and beta chains form an alternating ring which encloses part of the gamma chain. F(1) is attached to F(0) by a central stalk formed by the gamma and epsilon chains, while a peripheral stalk is formed by the delta, b and b' chains.

It localises to the plastid membrane. Functionally, f(1)F(0) ATP synthase produces ATP from ADP in the presence of a proton or sodium gradient. F-type ATPases consist of two structural domains, F(1) containing the extramembraneous catalytic core and F(0) containing the membrane proton channel, linked together by a central stalk and a peripheral stalk. During catalysis, ATP synthesis in the catalytic domain of F(1) is coupled via a rotary mechanism of the central stalk subunits to proton translocation. Key component of the F(0) channel; it plays a direct role in translocation across the membrane. A homomeric c-ring of between 10-14 subunits forms the central stalk rotor element with the F(1) delta and epsilon subunits. In Aneura mirabilis (Parasitic liverwort), this protein is ATP synthase subunit C, plastid.